The primary structure comprises 414 residues: Tyrosine--tRNA ligase (414 aa).

Position 35 (tyrosine 35) interacts with L-tyrosine. The 'HIGH' region signature appears at 40 to 49; that stretch reads PTADSLHVGH. L-tyrosine-binding residues include tyrosine 164 and glutamine 168. The 'KMSKS' region motif lies at 226–230; sequence KFGKT. Residue lysine 229 participates in ATP binding. The 68-residue stretch at 347–414 folds into the S4 RNA-binding domain; it reads TKVIDALVEL…KKKYFVILVK (68 aa).

It belongs to the class-I aminoacyl-tRNA synthetase family. TyrS type 1 subfamily. In terms of assembly, homodimer.

It is found in the cytoplasm. The enzyme catalyses tRNA(Tyr) + L-tyrosine + ATP = L-tyrosyl-tRNA(Tyr) + AMP + diphosphate + H(+). Functionally, catalyzes the attachment of tyrosine to tRNA(Tyr) in a two-step reaction: tyrosine is first activated by ATP to form Tyr-AMP and then transferred to the acceptor end of tRNA(Tyr). In Mycoplasma capricolum subsp. capricolum (strain California kid / ATCC 27343 / NCTC 10154), this protein is Tyrosine--tRNA ligase.